The following is a 160-amino-acid chain: SsrA-binding protein (160 aa).

The protein belongs to the SmpB family.

Its subcellular location is the cytoplasm. Functionally, required for rescue of stalled ribosomes mediated by trans-translation. Binds to transfer-messenger RNA (tmRNA), required for stable association of tmRNA with ribosomes. tmRNA and SmpB together mimic tRNA shape, replacing the anticodon stem-loop with SmpB. tmRNA is encoded by the ssrA gene; the 2 termini fold to resemble tRNA(Ala) and it encodes a 'tag peptide', a short internal open reading frame. During trans-translation Ala-aminoacylated tmRNA acts like a tRNA, entering the A-site of stalled ribosomes, displacing the stalled mRNA. The ribosome then switches to translate the ORF on the tmRNA; the nascent peptide is terminated with the 'tag peptide' encoded by the tmRNA and targeted for degradation. The ribosome is freed to recommence translation, which seems to be the essential function of trans-translation. The sequence is that of SsrA-binding protein from Escherichia coli O6:K15:H31 (strain 536 / UPEC).